We begin with the raw amino-acid sequence, 314 residues long: Nodulation protein D 1 (314 aa).

Positions L6–T63 constitute an HTH lysR-type domain. Positions L23–A42 form a DNA-binding region, H-T-H motif.

Belongs to the LysR transcriptional regulatory family.

Its function is as follows. NodD regulates the expression of the nodABCFE genes which encode other nodulation proteins. NodD is also a negative regulator of its own expression. Binds flavonoids as inducers. The chain is Nodulation protein D 1 (nodD1) from Bradyrhizobium sp. (strain NC92).